The chain runs to 133 residues: Small ribosomal subunit protein uS9 (133 aa).

Residues lysine 102–arginine 133 are disordered. Residues leucine 107–lysine 118 are compositionally biased toward basic and acidic residues. The segment covering tyrosine 119–arginine 133 has biased composition (basic residues).

The protein belongs to the universal ribosomal protein uS9 family.

The polypeptide is Small ribosomal subunit protein uS9 (Deinococcus deserti (strain DSM 17065 / CIP 109153 / LMG 22923 / VCD115)).